A 113-amino-acid polypeptide reads, in one-letter code: DTIFGKIISKEIPSTVVYEDDKVLAFRDITPQGPVHILLIPKVRDGLTGLFKAEERHIDILGRLLYTAKLVAKQEGLDEGFRIVINDGPQGCQSVYHIHVHLIGGRQMNWPPG.

In terms of domain architecture, HIT spans 3 to 113 (IFGKIISKEI…GGRQMNWPPG (111 aa)). Positions 97–101 (HIHVH) match the Histidine triad motif motif.

In terms of assembly, homodimer.

In Brassica juncea (Indian mustard), this protein is 14 kDa zinc-binding protein.